The chain runs to 196 residues: Peptide deformylase (196 aa).

The Fe cation site is built by Cys123 and His166. Residue Glu167 is part of the active site. Fe cation is bound at residue His170.

It belongs to the polypeptide deformylase family. Fe(2+) is required as a cofactor.

It catalyses the reaction N-terminal N-formyl-L-methionyl-[peptide] + H2O = N-terminal L-methionyl-[peptide] + formate. In terms of biological role, removes the formyl group from the N-terminal Met of newly synthesized proteins. Requires at least a dipeptide for an efficient rate of reaction. N-terminal L-methionine is a prerequisite for activity but the enzyme has broad specificity at other positions. The sequence is that of Peptide deformylase from Lactococcus lactis subsp. lactis (strain IL1403) (Streptococcus lactis).